The following is a 437-amino-acid chain: Epsilon-sarcoglycan (437 aa).

The Extracellular portion of the chain corresponds to 1–317 (MLLFWWWELG…LKSRDYYTDF (317 aa)). Asn200 carries an N-linked (GlcNAc...) asparagine glycan. A helical membrane pass occupies residues 318–338 (LVTLAVPSAVALVLFLILAYI). Residues 339–437 (MCCRREGVEK…QPQTTGKWYP (99 aa)) lie on the Cytoplasmic side of the membrane.

Belongs to the sarcoglycan alpha/epsilon family. N-glycosylated. In terms of processing, ubiquitinated, leading to its degradation by the proteasome. Identified in all tissues tested. Expression highest in lung and placenta, moderate in brain, heart and skeletal muscle, low in kidney and liver. Also detected in embryo.

It localises to the cell membrane. It is found in the sarcolemma. The protein resides in the golgi apparatus. The protein localises to the cell projection. Its subcellular location is the dendrite. It localises to the cytoplasm. It is found in the cytoskeleton. In terms of biological role, component of the sarcoglycan complex, a subcomplex of the dystrophin-glycoprotein complex which forms a link between the F-actin cytoskeleton and the extracellular matrix. In Mus musculus (Mouse), this protein is Epsilon-sarcoglycan (Sgce).